Reading from the N-terminus, the 459-residue chain is Hemopexin (459 aa).

Positions 1 to 23 are cleaved as a signal peptide; sequence MARALRVPVALWLLGLCWSLAKA. Disulfide bonds link Cys52–Cys232, Cys150–Cys155, and Cys189–Cys201. Hemopexin repeat units lie at residues 55-95, 96-140, 141-185, and 186-232; these read GWGF…WKDA, PSPV…FPGI, PFPL…SWPA, and VGNC…FMSC. A heme-binding site is contributed by His81. His151 serves as a coordination point for heme. Residue Asn188 is glycosylated (N-linked (GlcNAc...) asparagine). Asn218 is a glycosylation site (N-linked (GlcNAc...) asparagine). His237 provides a ligand contact to heme. An N-linked (GlcNAc...) asparagine glycan is attached at Asn241. Disulfide bonds link Cys250–Cys453, Cys359–Cys401, and Cys411–Cys428. 4 Hemopexin repeats span residues 252–297, 298–345, 350–389, and 393–444; these read PHLV…WPQG, PSTV…FGSP, LHSV…WTEL, and HTKV…LPQA. Position 286 (His286) interacts with heme.

Belongs to the hemopexin family.

It is found in the secreted. Its function is as follows. Binds heme and transports it to the liver for breakdown and iron recovery, after which the free hemopexin returns to the circulation. This chain is Hemopexin (HPX), found in Bos taurus (Bovine).